The sequence spans 130 residues: Cystatin (130 aa).

Positions 1–19 are cleaved as a signal peptide; sequence MEWKIVVPLLAVAFTVANA. The Secondary area of contact motif lies at 67-71; sequence QVVSG. 2 disulfide bridges follow: cysteine 85–cysteine 94 and cysteine 108–cysteine 128.

The protein belongs to the cystatin family. In terms of tissue distribution, ubiquitous expression including brain, white muscle, heart, gill, kidney, spleen, liver and skin with the highest and lowest level in brain and gill, respectively.

It is found in the secreted. Cysteine proteinase inhibitor. This Oncorhynchus keta (Chum salmon) protein is Cystatin.